Consider the following 382-residue polypeptide: 6-oxocyclohex-1-ene-1-carbonyl-CoA hydrolase (382 aa).

The protein belongs to the enoyl-CoA hydratase/isomerase family. As to quaternary structure, homohexamer.

It carries out the reaction 6-oxocyclohex-1-ene-1-carbonyl-CoA + 2 H2O = 3-hydroxy-6-carboxyhexanoyl-CoA + H(+). It functions in the pathway aromatic compound metabolism; benzoyl-CoA degradation. Involved in the central benzoyl-CoA catabolism. Catalyzes the addition of one molecule of water to the double bond and the hydrolytic cleavage of C-C bond in the alicyclic ring, 6-oxocyclohex-1-ene-1-carbonyl-CoA (6-OCH-CoA) to yield 3-hydroxypimelyl-CoA. This chain is 6-oxocyclohex-1-ene-1-carbonyl-CoA hydrolase, found in Syntrophus aciditrophicus (strain SB).